Consider the following 408-residue polypeptide: Peptidase T (408 aa).

The tract at residues 1 to 28 (MKNQLIDRLTRYTTIDTQSDPKSTTTPS) is disordered. Polar residues predominate over residues 11 to 28 (RYTTIDTQSDPKSTTTPS). Zn(2+) is bound at residue His78. Residue Asp80 is part of the active site. Asp140 contacts Zn(2+). The active-site Proton acceptor is the Glu174. 3 residues coordinate Zn(2+): Glu175, Asp197, and His379.

Belongs to the peptidase M20B family. Requires Zn(2+) as cofactor.

It localises to the cytoplasm. The catalysed reaction is Release of the N-terminal residue from a tripeptide.. Its function is as follows. Cleaves the N-terminal amino acid of tripeptides. The polypeptide is Peptidase T (Staphylococcus aureus (strain USA300 / TCH1516)).